Reading from the N-terminus, the 466-residue chain is A-type ATP synthase subunit B 2 (466 aa).

The protein belongs to the ATPase alpha/beta chains family. In terms of assembly, has multiple subunits with at least A(3), B(3), C, D, E, F, H, I and proteolipid K(x).

The protein localises to the cell membrane. Functionally, component of the A-type ATP synthase that produces ATP from ADP in the presence of a proton gradient across the membrane. The B chain is a regulatory subunit. The sequence is that of A-type ATP synthase subunit B 2 from Methanospirillum hungatei JF-1 (strain ATCC 27890 / DSM 864 / NBRC 100397 / JF-1).